The chain runs to 466 residues: Putative transcription factor bHLH041 (466 aa).

Disordered stretches follow at residues 108–129, 194–213, and 260–289; these read PANS…SLSP, LTGP…KGRA, and RENA…TQLQ. The segment covering 120-129 has biased composition (low complexity); sequence PSSSSSSLSP. A compositionally biased stretch (gly residues) spans 268–279; that stretch reads EGSGGSGGGGRY. Residues 285 to 334 enclose the bHLH domain; it reads ATQLQHMISERKRREKLNESFQALRSLLPPGTKKDKASVLSIAREQLSSL.

In terms of assembly, homodimer.

It is found in the nucleus. This chain is Putative transcription factor bHLH041 (BHLH41), found in Arabidopsis thaliana (Mouse-ear cress).